Here is a 361-residue protein sequence, read N- to C-terminus: Outer mitochondrial transmembrane helix translocase (361 aa).

The Mitochondrial intermembrane portion of the chain corresponds to 1–15; sequence MVHAEAFSRPLSRNE. The chain crosses the membrane as a helical span at residues 16 to 32; sequence VVGLIFRLTIFGAVTYF. The Cytoplasmic portion of the chain corresponds to 33 to 361; sequence TIKWMVDAID…QNVLTHVCLD (329 aa). Residue 133–140 participates in ATP binding; the sequence is GPPGCGKT. Phosphoserine is present on Ser-322.

Belongs to the AAA ATPase family. MSP1 subfamily. Interacts with GRIA2 and GRIP1 in an ATP-dependent manner. ATAD1-catalyzed ATP hydrolysis disrupts not only its binding to GRIA2 and GRIP1, but also interaction between GRIP1 and GRIA2, leading to AMPAR complex disassembly.

Its subcellular location is the mitochondrion outer membrane. It is found in the peroxisome membrane. It localises to the postsynaptic cell membrane. It carries out the reaction [protein]-with a C-terminal TM segment(out) + ATP + H2O = [protein]-with a C-terminal TM segment(in) + ADP + phosphate + H(+). In terms of biological role, outer mitochondrial translocase required to remove mislocalized tail-anchored transmembrane proteins on mitochondria. Specifically recognizes and binds tail-anchored transmembrane proteins: acts as a dislocase that mediates the ATP-dependent extraction of mistargeted tail-anchored transmembrane proteins from the mitochondrion outer membrane. Also plays a critical role in regulating the surface expression of AMPA receptors (AMPAR), thereby regulating synaptic plasticity and learning and memory. Required for NMDA-stimulated AMPAR internalization and inhibition of GRIA1 and GRIA2 recycling back to the plasma membrane; these activities are ATPase-dependent. The chain is Outer mitochondrial transmembrane helix translocase from Homo sapiens (Human).